A 353-amino-acid polypeptide reads, in one-letter code: Rhodopsin (353 aa).

Topologically, residues 1–36 (MNGTEGPFFYVPMVNTTGIVRSPYDYPQYYLVSPAA) are extracellular. N-linked (GlcNAc...) asparagine glycosylation is found at Asn-2 and Asn-15. A helical transmembrane segment spans residues 37–61 (YAALGAYMFLLILLGFPINFLTLYV). Topologically, residues 62 to 73 (TIEHKKLRTPLN) are cytoplasmic. A helical membrane pass occupies residues 74–96 (YILLNLAVADLFMVFGGFTTTMY). Over 97-110 (TSMHGYFVLGRLGC) the chain is Extracellular. An intrachain disulfide couples Cys-110 to Cys-187. Residues 111–133 (NMEGFFATLGGEIGLWSLVVLAV) form a helical membrane-spanning segment. Positions 134–136 (ERW) match the 'Ionic lock' involved in activated form stabilization motif. Topologically, residues 134 to 152 (ERWLVVCKPISNFRFGENH) are cytoplasmic. The helical transmembrane segment at 153–173 (AIMGLAFTWVMACSCAVPPLV) threads the bilayer. Topologically, residues 174-202 (GWSRYIPEGMQCSCGVDYYTRAEGFNNES) are extracellular. A glycan (N-linked (GlcNAc...) asparagine) is linked at Asn-200. The helical transmembrane segment at 203–224 (FVIYMFACHFIIPMCVVFFCYG) threads the bilayer. Topologically, residues 225-252 (RLLCAVKEAAAAQQESETTQRAEKEVTR) are cytoplasmic. A helical membrane pass occupies residues 253–274 (MVVIMGIAFLICWCPYASVAWY). Residues 275-286 (IFTHQGSEFGPV) are Extracellular-facing. Residues 287-308 (FMTLPAFFAKTSSVYNPLIYIL) traverse the membrane as a helical segment. Lys-296 carries the N6-(retinylidene)lysine modification. Residues 309-353 (MNKQFRHCMITTLCCGKNPFEEEEGASTASKTEASSVSSSSVSPA) lie on the Cytoplasmic side of the membrane. 2 S-palmitoyl cysteine lipidation sites follow: Cys-322 and Cys-323. Positions 331–353 (EEGASTASKTEASSVSSSSVSPA) are disordered. Over residues 334–353 (ASTASKTEASSVSSSSVSPA) the composition is skewed to low complexity.

This sequence belongs to the G-protein coupled receptor 1 family. Opsin subfamily. Post-translationally, phosphorylated on some or all of the serine and threonine residues present in the C-terminal region. Contains one covalently linked retinal chromophore.

The protein localises to the membrane. It is found in the cell projection. Its subcellular location is the cilium. The protein resides in the photoreceptor outer segment. Functionally, photoreceptor required for image-forming vision at low light intensity. While most salt water fish species use retinal as chromophore, most freshwater fish use 3-dehydroretinal, or a mixture of retinal and 3-dehydroretinal. Light-induced isomerization of 11-cis to all-trans retinal triggers a conformational change that activates signaling via G-proteins. Subsequent receptor phosphorylation mediates displacement of the bound G-protein alpha subunit by arrestin and terminates signaling. This Dicentrarchus labrax (European seabass) protein is Rhodopsin (rho).